The sequence spans 302 residues: Sulfate adenylyltransferase subunit 2 (302 aa).

The segment at 280–302 (RQGRAIDHDQSGSMELKKRQGYF) is disordered.

This sequence belongs to the PAPS reductase family. CysD subfamily. Heterodimer composed of CysD, the smaller subunit, and CysN.

The enzyme catalyses sulfate + ATP + H(+) = adenosine 5'-phosphosulfate + diphosphate. It functions in the pathway sulfur metabolism; hydrogen sulfide biosynthesis; sulfite from sulfate: step 1/3. In terms of biological role, with CysN forms the ATP sulfurylase (ATPS) that catalyzes the adenylation of sulfate producing adenosine 5'-phosphosulfate (APS) and diphosphate, the first enzymatic step in sulfur assimilation pathway. APS synthesis involves the formation of a high-energy phosphoric-sulfuric acid anhydride bond driven by GTP hydrolysis by CysN coupled to ATP hydrolysis by CysD. The chain is Sulfate adenylyltransferase subunit 2 from Vibrio cholerae serotype O1 (strain ATCC 39315 / El Tor Inaba N16961).